Reading from the N-terminus, the 438-residue chain is 23S rRNA (uracil(1939)-C(5))-methyltransferase RlmD (438 aa).

The region spanning K10–K69 is the TRAM domain. Positions 82, 88, 91, and 169 each coordinate [4Fe-4S] cluster. Q272, F301, N306, E322, N349, and D370 together coordinate S-adenosyl-L-methionine. The active-site Nucleophile is C396.

This sequence belongs to the class I-like SAM-binding methyltransferase superfamily. RNA M5U methyltransferase family. RlmD subfamily.

It carries out the reaction uridine(1939) in 23S rRNA + S-adenosyl-L-methionine = 5-methyluridine(1939) in 23S rRNA + S-adenosyl-L-homocysteine + H(+). In terms of biological role, catalyzes the formation of 5-methyl-uridine at position 1939 (m5U1939) in 23S rRNA. This chain is 23S rRNA (uracil(1939)-C(5))-methyltransferase RlmD, found in Aliivibrio salmonicida (strain LFI1238) (Vibrio salmonicida (strain LFI1238)).